A 434-amino-acid polypeptide reads, in one-letter code: Probable tRNA pseudouridine synthase D (434 aa).

The Nucleophile role is filled by D93. The 228-residue stretch at 169 to 396 (GTPNYFGQQR…SAGSRRAILL (228 aa)) folds into the TRUD domain.

The protein belongs to the pseudouridine synthase TruD family.

It catalyses the reaction uridine(13) in tRNA = pseudouridine(13) in tRNA. Its function is as follows. Could be responsible for synthesis of pseudouridine from uracil-13 in transfer RNAs. In Halobacterium salinarum (strain ATCC 29341 / DSM 671 / R1), this protein is Probable tRNA pseudouridine synthase D.